A 132-amino-acid chain; its full sequence is Ribosome-binding factor A (132 aa).

The protein belongs to the RbfA family. Monomer. Binds 30S ribosomal subunits, but not 50S ribosomal subunits or 70S ribosomes.

The protein resides in the cytoplasm. One of several proteins that assist in the late maturation steps of the functional core of the 30S ribosomal subunit. Associates with free 30S ribosomal subunits (but not with 30S subunits that are part of 70S ribosomes or polysomes). Required for efficient processing of 16S rRNA. May interact with the 5'-terminal helix region of 16S rRNA. This Burkholderia lata (strain ATCC 17760 / DSM 23089 / LMG 22485 / NCIMB 9086 / R18194 / 383) protein is Ribosome-binding factor A.